The sequence spans 171 residues: Putative adenylate kinase (171 aa).

Positions 9, 11, 12, 13, and 14 each coordinate ATP. The segment at 28–51 is NMP; the sequence is SLGELIRQKGFVLGRDPIRGYLEA. Residues 99–109 are LID; sequence GRGYPEGKVLE. R100 is a binding site for ATP.

Belongs to the adenylate kinase family. AK6 subfamily. In terms of assembly, interacts with uS11. Not a structural component of 40S pre-ribosomes, but transiently interacts with them by binding to uS11.

It carries out the reaction AMP + ATP = 2 ADP. It catalyses the reaction ATP + H2O = ADP + phosphate + H(+). Broad-specificity nucleoside monophosphate (NMP) kinase that catalyzes the reversible transfer of the terminal phosphate group between nucleoside triphosphates and monophosphates. Also has ATPase activity. Involved in the late maturation steps of the 30S ribosomal particles, specifically 16S rRNA maturation. While NMP activity is not required for ribosome maturation, ATPase activity is. Associates transiently with small ribosomal subunit protein uS11. ATP hydrolysis breaks the interaction with uS11. May temporarily remove uS11 from the ribosome to enable a conformational change of the ribosomal RNA that is needed for the final maturation step of the small ribosomal subunit. The sequence is that of Putative adenylate kinase from Methanothermobacter thermautotrophicus (strain ATCC 29096 / DSM 1053 / JCM 10044 / NBRC 100330 / Delta H) (Methanobacterium thermoautotrophicum).